Here is a 929-residue protein sequence, read N- to C-terminus: Thrombospondin-3b (929 aa).

The signal sequence occupies residues 1-22 (MELRKIVPNLLVLYVAVHFSQS). The region spanning 24-192 (EIKVINVLEL…VESVKLALGG (169 aa)) is the Laminin G-like domain. The N-linked (GlcNAc...) asparagine glycan is linked to Asn-45. 18 cysteine pairs are disulfide-bonded: Cys-277–Cys-288, Cys-282–Cys-299, Cys-319–Cys-343, Cys-349–Cys-362, Cys-356–Cys-371, Cys-374–Cys-386, Cys-392–Cys-406, Cys-400–Cys-416, Cys-418–Cys-429, Cys-445–Cys-452, Cys-457–Cys-477, Cys-493–Cys-513, Cys-516–Cys-536, Cys-552–Cys-572, Cys-575–Cys-595, Cys-613–Cys-633, Cys-653–Cys-673, and Cys-689–Cys-910. Residues 345-384 (DIDECAELSGSCVPNSVCINTVGSFKCGQCKAGFVGNQTV) enclose the EGF-like 1; calcium-binding domain. N-linked (GlcNAc...) asparagine glycosylation is present at Asn-381. An EGF-like 2 domain is found at 388–430 (ARRTCETLGYSPCDVNSHCVMGRNSDVSCVCNVGWAGNGNICG). TSP type-3 repeat units lie at residues 431–465 (PDSD…NSGQ), 466–501 (EDTD…NKDQ), 502–524 (QNSD…NGDQ), 525–560 (LDTD…NPMQ), 561–583 (TDRD…DPLQ), 584–621 (SDMD…NSSQ), 622–661 (LDSD…NPSQ), and 662–697 (IDTD…EVTM). Residues 602-613 (DGDGYQDTRDNC) are compositionally biased toward basic and acidic residues. The segment at 602–651 (DGDGYQDTRDNCPEVPNSSQLDSDNDGIGDECDDDDDNDGIPDILPPGPD) is disordered. N-linked (GlcNAc...) asparagine glycosylation is present at Asn-618. The span at 624–641 (SDNDGIGDECDDDDDNDG) shows a compositional bias: acidic residues. Positions 701–915 (RAFQTVILDP…LGYRCNDSIP (215 aa)) constitute a TSP C-terminal domain. Asn-911 carries an N-linked (GlcNAc...) asparagine glycan.

This sequence belongs to the thrombospondin family. As to quaternary structure, oligomer; disulfide-linked.

Adhesive glycoprotein that mediates cell-to-cell and cell-to-matrix interactions. Can bind to fibrinogen, fibronectin, laminin and type V collagen. This Danio rerio (Zebrafish) protein is Thrombospondin-3b.